The following is a 248-amino-acid chain: Pathogenesis-related thaumatin-like protein 3.4 (248 aa).

An N-terminal signal peptide occupies residues 1–25 (MARAILWVLLTVMAVSLLLHAGVEG). Intrachain disulfides connect cysteine 34/cysteine 227, cysteine 75/cysteine 85, cysteine 90/cysteine 96, cysteine 141/cysteine 216, cysteine 146/cysteine 199, cysteine 154/cysteine 164, cysteine 168/cysteine 177, and cysteine 178/cysteine 186. The N-linked (GlcNAc...) asparagine glycan is linked to asparagine 235.

It belongs to the thaumatin family. As to expression, mainly expressed in male and female strobili, and, at lower levels, in roots of seedlings and saplings.

May be involved in disease resistance. The polypeptide is Pathogenesis-related thaumatin-like protein 3.4 (Cryptomeria japonica (Japanese cedar)).